The following is a 457-amino-acid chain: BAG family molecular chaperone regulator 4 (457 aa).

Residues 1–101 form a disordered region; the sequence is MSALRRSGYG…QPPYPSYNSN (101 aa). The residue at position 7 (serine 7) is a Phosphoserine. The segment covering 8–20 has biased composition (low complexity); sequence GYGPSDGPSYGRY. The segment covering 30–47 has biased composition (pro residues); it reads VHPPPPLYPLRPEPPQPP. Residues arginine 40, arginine 53, and arginine 108 each carry the omega-N-methylarginine modification. 3 disordered regions span residues 113–136, 166–333, and 347–377; these read YPST…NGAY, STEV…DDSD, and LYGN…ESTP. Residues 166 to 182 show a composition bias toward polar residues; that stretch reads STEVPSTYRSSGNSPTP. Arginine 185 is subject to Omega-N-methylarginine. Low complexity-rich tracts occupy residues 274–284 and 294–308; these read STSPWPSSGSP and QPKD…SDQS. 2 stretches are compositionally biased toward polar residues: residues 320–333 and 347–365; these read QYES…DDSD and LYGN…SSSL. Residues 379-456 enclose the BAG domain; the sequence is SIKKIIHVLE…AILEKLEKKG (78 aa).

In terms of assembly, binds to the ATPase domain of HSP/HSC70 chaperones. Binds to the death domain of TNFRSF1A in the absence of TNF and thereby prevents binding of adapter molecules such as TRADD or TRAF2. Binds to the death domain of TNFRSF12. Interacts with PRKN. Ubiquitous.

The protein resides in the cytoplasm. Its function is as follows. Inhibits the chaperone activity of HSP70/HSC70 by promoting substrate release. Prevents constitutive TNFRSF1A signaling. Negative regulator of PRKN translocation to damaged mitochondria. In Homo sapiens (Human), this protein is BAG family molecular chaperone regulator 4 (BAG4).